The primary structure comprises 729 residues: Fatty acid oxidation complex subunit alpha (729 aa).

The tract at residues 1–189 is enoyl-CoA hydratase/isomerase; sequence MLYKGDTLYL…KIGLVDGVVK (189 aa). Position 296 (aspartate 296) interacts with substrate. Positions 311-729 are 3-hydroxyacyl-CoA dehydrogenase; sequence ETPKQAAVLG…ARPVGDLKTA (419 aa). Residues methionine 324, aspartate 343, 400 to 402, lysine 407, and serine 429 contribute to the NAD(+) site; that span reads VVE. The active-site For 3-hydroxyacyl-CoA dehydrogenase activity is the histidine 450. Asparagine 453 contacts NAD(+). Substrate-binding residues include asparagine 500 and tyrosine 660. The segment at 708–729 is disordered; that stretch reads RHNEPYYPPVEPARPVGDLKTA.

This sequence in the N-terminal section; belongs to the enoyl-CoA hydratase/isomerase family. It in the C-terminal section; belongs to the 3-hydroxyacyl-CoA dehydrogenase family. Heterotetramer of two alpha chains (FadB) and two beta chains (FadA).

The enzyme catalyses a (3S)-3-hydroxyacyl-CoA + NAD(+) = a 3-oxoacyl-CoA + NADH + H(+). It catalyses the reaction a (3S)-3-hydroxyacyl-CoA = a (2E)-enoyl-CoA + H2O. It carries out the reaction a 4-saturated-(3S)-3-hydroxyacyl-CoA = a (3E)-enoyl-CoA + H2O. The catalysed reaction is (3S)-3-hydroxybutanoyl-CoA = (3R)-3-hydroxybutanoyl-CoA. The enzyme catalyses a (3Z)-enoyl-CoA = a 4-saturated (2E)-enoyl-CoA. It catalyses the reaction a (3E)-enoyl-CoA = a 4-saturated (2E)-enoyl-CoA. The protein operates within lipid metabolism; fatty acid beta-oxidation. Functionally, involved in the aerobic and anaerobic degradation of long-chain fatty acids via beta-oxidation cycle. Catalyzes the formation of 3-oxoacyl-CoA from enoyl-CoA via L-3-hydroxyacyl-CoA. It can also use D-3-hydroxyacyl-CoA and cis-3-enoyl-CoA as substrate. This chain is Fatty acid oxidation complex subunit alpha, found in Escherichia coli O81 (strain ED1a).